A 291-amino-acid chain; its full sequence is tRNA U34 carboxymethyltransferase (291 aa).

Carboxy-S-adenosyl-L-methionine-binding positions include Lys61, Trp75, Lys80, Gly100, 122 to 124 (DPS), 149 to 150 (VE), Tyr169, and Arg284.

It belongs to the class I-like SAM-binding methyltransferase superfamily. CmoB family. As to quaternary structure, homotetramer.

It catalyses the reaction carboxy-S-adenosyl-L-methionine + 5-hydroxyuridine(34) in tRNA = 5-carboxymethoxyuridine(34) in tRNA + S-adenosyl-L-homocysteine + H(+). Functionally, catalyzes carboxymethyl transfer from carboxy-S-adenosyl-L-methionine (Cx-SAM) to 5-hydroxyuridine (ho5U) to form 5-carboxymethoxyuridine (cmo5U) at position 34 in tRNAs. This chain is tRNA U34 carboxymethyltransferase, found in Campylobacter jejuni subsp. doylei (strain ATCC BAA-1458 / RM4099 / 269.97).